A 441-amino-acid polypeptide reads, in one-letter code: MTVSTAIARLNAADPDFARHLDHLLSWESVSDDAVNQRVLDIIKAVRERGDAALVEFTQRFDGVDAKSIDDLILDRARLELALTRITPVQREALEKAANRVRIYHERQKQDSWQYTEADGTVLGQKVTPLDRAGLYVPGGKASYPSSVLMNAIPAKVAGVTEVVMVVPTPRGEVNELVLAAACIAGVDRVFTVGGAQAVAALAYGTESVPQVDKIVGPGNIYVATAKRHVFGQVGIDMIAGPSEILVVCDGQTDPDWIAMDLFSQAEHDEDAQAILVSPDAAFLDRVAASIDKLMPTMERADIIEKSINGRGALIQVRDMQQAMDVANRIAPEHLELSVADPQAWLPHIRHAGAIFMGRHTSEALGDYCAGPNHVLPTSGTARFSSPLGVYDFQKRSSIIFCSEQGASELGHTASVLARGESLTAHARSAEYRILTQEKGN.

Positions 136, 197, and 220 each coordinate NAD(+). Ser243, Gln265, and His268 together coordinate substrate. Zn(2+) is bound by residues Gln265 and His268. Residues Glu333 and His334 each act as proton acceptor in the active site. His334, Asp367, Glu421, and His426 together coordinate substrate. Position 367 (Asp367) interacts with Zn(2+). Position 426 (His426) interacts with Zn(2+).

It belongs to the histidinol dehydrogenase family. Zn(2+) serves as cofactor.

It carries out the reaction L-histidinol + 2 NAD(+) + H2O = L-histidine + 2 NADH + 3 H(+). Its pathway is amino-acid biosynthesis; L-histidine biosynthesis; L-histidine from 5-phospho-alpha-D-ribose 1-diphosphate: step 9/9. Catalyzes the sequential NAD-dependent oxidations of L-histidinol to L-histidinaldehyde and then to L-histidine. This chain is Histidinol dehydrogenase, found in Pseudomonas putida (strain ATCC 47054 / DSM 6125 / CFBP 8728 / NCIMB 11950 / KT2440).